The chain runs to 350 residues: Protein XRP2 (350 aa).

Positions 1–10 (MGCFFSKRRK) are enriched in basic residues. Residues 1 to 31 (MGCFFSKRRKADKESRPENEEERPKQYSWDQ) form a disordered region. Gly2 carries N-myristoyl glycine lipidation. Residue Cys3 is the site of S-palmitoyl cysteine attachment. A compositionally biased stretch (basic and acidic residues) spans 11 to 31 (ADKESRPENEEERPKQYSWDQ). The C-CAP/cofactor C-like domain occupies 24 to 179 (PKQYSWDQRE…TWSNIHDFTP (156 aa)). GTP-binding positions include 98–99 (GS) and 115–118 (QQFR).

Belongs to the TBCC family. Found in a complex with ARL3, RP2 and UNC119 (or UNC119B); RP2 induces hydrolysis of GTP ARL3 in the complex, leading to the release of UNC119 (or UNC119B). Interacts with ARL3; interaction is direct and stimulated with the activated GTP-bound form of ARL3. Post-translationally, myristoylated on Gly-2; which may be required for membrane targeting. Palmitoylated on Cys-3; which may be required for plasma membrane targeting. Mutation of Cys-3 targets the protein to internal membranes. Ubiquitous. Expressed in the rod and cone photoreceptors, extending from the tips of the outer segment (OS) through the inner segment (IS) and outer nuclear layer (ONL) and into the synaptic terminals of the outer plexiform layer (ONL). Also detected in the bipolar, horizontal and amacrine cells in the inner nuclear layer (INL), extending to the inner plexiform layer (IPL) and though the ganglion cell layer (GCL) and into the nerve fiber layer (NFL) (at protein level).

Its subcellular location is the cell membrane. The protein localises to the cell projection. The protein resides in the cilium. Its function is as follows. Acts as a GTPase-activating protein (GAP) involved in trafficking between the Golgi and the ciliary membrane. Involved in localization of proteins, such as NPHP3, to the cilium membrane by inducing hydrolysis of GTP ARL3, leading to the release of UNC119 (or UNC119B). Acts as a GTPase-activating protein (GAP) for tubulin in concert with tubulin-specific chaperone C, but does not enhance tubulin heterodimerization. Acts as a guanine nucleotide dissociation inhibitor towards ADP-ribosylation factor-like proteins. The chain is Protein XRP2 (RP2) from Homo sapiens (Human).